The sequence spans 244 residues: U11/U12 small nuclear ribonucleoprotein 35 kDa protein (244 aa).

The region spanning 51–129 is the RRM domain; that stretch reads LTLFVARLNL…HEIFVDYELE (79 aa). Over residues 146 to 162 the composition is skewed to basic and acidic residues; it reads GKKESGQLRFGGRDRPF. Positions 146–244 are disordered; that stretch reads GKKESGQLRF…KSRDKRDRSK (99 aa). A Glycyl lysine isopeptide (Lys-Gly) (interchain with G-Cter in SUMO2) cross-link involves residue K172. Composition is skewed to basic and acidic residues over residues 173–185 and 192–244; these read NEPHREGKRERRE and RHWD…DRSK.

As to quaternary structure, component of the U11/U12 snRNPs that are part of the U12-type spliceosome.

Its subcellular location is the nucleus. The chain is U11/U12 small nuclear ribonucleoprotein 35 kDa protein (Snrnp35) from Mus musculus (Mouse).